Reading from the N-terminus, the 218-residue chain is Ribose-5-phosphate isomerase A (218 aa).

Residues 28 to 31, 81 to 84, and 94 to 97 each bind substrate; these read TGST, DGAD, and KGGG. Residue Glu-103 is the Proton acceptor of the active site. Lys-121 contacts substrate.

It belongs to the ribose 5-phosphate isomerase family. In terms of assembly, homodimer.

It catalyses the reaction aldehydo-D-ribose 5-phosphate = D-ribulose 5-phosphate. The protein operates within carbohydrate degradation; pentose phosphate pathway; D-ribose 5-phosphate from D-ribulose 5-phosphate (non-oxidative stage): step 1/1. Its function is as follows. Catalyzes the reversible conversion of ribose-5-phosphate to ribulose 5-phosphate. This Aliivibrio fischeri (strain ATCC 700601 / ES114) (Vibrio fischeri) protein is Ribose-5-phosphate isomerase A.